The sequence spans 388 residues: Na(+)/H(+) antiporter NhaA (388 aa).

The next 12 helical transmembrane spans lie at 14 to 34, 59 to 79, 95 to 115, 125 to 145, 154 to 174, 177 to 197, 200 to 220, 222 to 242, 257 to 277, 295 to 315, 328 to 348, and 362 to 382; these read TIGI…NSPL, LLLW…GLEI, TFPA…FASL, GWAI…SLLG, VFLM…IALF, TKLS…LFIM, MCVI…VSVL, SGVH…YRIN, GLHL…NAGV, IMLG…YLAV, LIQF…SLFI, and ADKL…YIVL.

The protein belongs to the NhaA Na(+)/H(+) (TC 2.A.33) antiporter family.

It localises to the cell inner membrane. The enzyme catalyses Na(+)(in) + 2 H(+)(out) = Na(+)(out) + 2 H(+)(in). Its function is as follows. Na(+)/H(+) antiporter that extrudes sodium in exchange for external protons. The protein is Na(+)/H(+) antiporter NhaA of Nitratiruptor sp. (strain SB155-2).